A 72-amino-acid polypeptide reads, in one-letter code: Cytochrome c oxidase subunit 8C, mitochondrial (72 aa).

A mitochondrion-targeting transit peptide spans 1-29 (MSRLLQFCSSLLRHRVVLFSKPGHSGRLS). At 30–40 (HSESPQNQVLT) the chain is on the mitochondrial matrix side. A helical transmembrane segment spans residues 41 to 64 (PTESVVGIVVFFATFFIPAAYVMS). The Mitochondrial intermembrane segment spans residues 65–72 (NLKFFKGE).

The protein belongs to the cytochrome c oxidase VIII family. Component of the cytochrome c oxidase (complex IV, CIV), a multisubunit enzyme composed of 14 subunits. The complex is composed of a catalytic core of 3 subunits MT-CO1, MT-CO2 and MT-CO3, encoded in the mitochondrial DNA, and 11 supernumerary subunits COX4I, COX5A, COX5B, COX6A, COX6B, COX6C, COX7A, COX7B, COX7C, COX8 and NDUFA4, which are encoded in the nuclear genome. The complex exists as a monomer or a dimer and forms supercomplexes (SCs) in the inner mitochondrial membrane with NADH-ubiquinone oxidoreductase (complex I, CI) and ubiquinol-cytochrome c oxidoreductase (cytochrome b-c1 complex, complex III, CIII), resulting in different assemblies (supercomplex SCI(1)III(2)IV(1) and megacomplex MCI(2)III(2)IV(2)).

The protein resides in the mitochondrion inner membrane. It participates in energy metabolism; oxidative phosphorylation. Component of the cytochrome c oxidase, the last enzyme in the mitochondrial electron transport chain which drives oxidative phosphorylation. The respiratory chain contains 3 multisubunit complexes succinate dehydrogenase (complex II, CII), ubiquinol-cytochrome c oxidoreductase (cytochrome b-c1 complex, complex III, CIII) and cytochrome c oxidase (complex IV, CIV), that cooperate to transfer electrons derived from NADH and succinate to molecular oxygen, creating an electrochemical gradient over the inner membrane that drives transmembrane transport and the ATP synthase. Cytochrome c oxidase is the component of the respiratory chain that catalyzes the reduction of oxygen to water. Electrons originating from reduced cytochrome c in the intermembrane space (IMS) are transferred via the dinuclear copper A center (CU(A)) of subunit 2 and heme A of subunit 1 to the active site in subunit 1, a binuclear center (BNC) formed by heme A3 and copper B (CU(B)). The BNC reduces molecular oxygen to 2 water molecules using 4 electrons from cytochrome c in the IMS and 4 protons from the mitochondrial matrix. This is Cytochrome c oxidase subunit 8C, mitochondrial (Cox8c) from Rattus norvegicus (Rat).